A 230-amino-acid polypeptide reads, in one-letter code: Methyltransferase aurB (230 aa).

This sequence belongs to the methyltransferase superfamily.

Its pathway is polyketide biosynthesis. Functionally, methyltransferase; part of the gene cluster that mediates the biosynthesis of aurovertins, fungal polyketides that exhibit potent inhibition of adenosine triphosphate synthase. Tha biosynthesis starts with the HR-PKS aurA that selects propionate as the starter unit; synthesizes a hexa-ene chain through the repeated functions of the KR and DH domains in the first six iterations; selectively introduces three alpha-methyl substitutions at C4, C6, and C16 using the S-adensylmethionine-dependent cMET; and shuts off KR and DH in the last three iterations to afford a 1,3,5-triketo portion that can undergo intramolecular cyclization to yield the alpha-pyrone intermediate. AurE may act as a cyclase and enhances the rate of pyrone formation and product release of aurA. The methyltransferase aurB then methylates the C17 hydroxyl group. C17 methylation is required to initiate epoxidation by the downstream monooxygenase aurC. The monooxygenase aurC and the epoxide hydrolase aurD can iteratively transform the terminal triene portion of the methylated precursor into the dioxabicyclo[3.2.1]octane scaffold of aurovertin E. Epoxidation modifications of the precursor occur in two separate steps; bis-epoxidation of the two terminal olefins takes place first, followed by another epoxidation that occurs at C7-C8 after tetrahydrofuran formation. The O-acyltransferase aurG converts aurovertin E to aurovertin A. In Calcarisporium arbuscula (Dendryphion arbuscula), this protein is Methyltransferase aurB.